The sequence spans 121 residues: Protein AC4 (121 aa).

Residues Arg-11–Gly-30 are disordered. The segment covering Gly-12–Gly-30 has biased composition (polar residues).

It belongs to the geminiviridae protein AC4/C4 family.

Its function is as follows. Pathogenicity determinant. May act as a suppressor of RNA-mediated gene silencing, also known as post-transcriptional gene silencing (PTGS), a mechanism of plant viral defense that limits the accumulation of viral RNAs. The sequence is that of Protein AC4 from Cabbage leaf curl virus (isolate Jamaica) (CaLCuV).